The primary structure comprises 370 residues: L-selectin (370 aa).

Residues 1–28 form the signal peptide; it reads MLCPWKCQNAQRGLWNVFKLWVWIMLCC. The propeptide occupies 29 to 38; the sequence is DFFAHHGTDC. The Extracellular segment spans residues 39–333; the sequence is WTYHYSKRPM…SINEESDYNP (295 aa). One can recognise a C-type lectin domain in the interval 55-155; the sequence is AFCRENYTDL…ACHKAKTALC (101 aa). Cystine bridges form between C57–C155, C128–C147, C128–C160, C160–C171, C165–C180, C182–C191, C197–C241, C227–C254, C259–C303, and C289–C316. N60, N77, and N104 each carry an N-linked (GlcNAc...) asparagine glycan. Residues E118, N120, E126, N143, and D144 each coordinate Ca(2+). Residues 156–192 enclose the EGF-like domain; the sequence is YTASCKPWSCSGHGQCVEVINNYTCNCDLGYYGPECQ. The N-linked (GlcNAc...) asparagine glycan is linked to N177. 2 consecutive Sushi domains span residues 195–256 and 257–318; these read TQCV…TCRV and IQCE…RCQK. 3 N-linked (GlcNAc...) asparagine glycosylation sites follow: N216, N226, and N246. N308 and N320 each carry an N-linked (GlcNAc...) asparagine glycan. The chain crosses the membrane as a helical span at residues 334–354; it reads LFIPVAVMVTAFSGLAFIIWL. The Cytoplasmic segment spans residues 355 to 370; it reads ARRLKRKSKKVSEKHG.

This sequence belongs to the selectin/LECAM family. As to quaternary structure, interaction with SELPLG/PSGL1 and PODXL2 is required for promoting recruitment and rolling of leukocytes. This interaction is dependent on the sialyl Lewis X glycan modification of SELPLG and PODXL2, and tyrosine sulfation modifications of SELPLG. Sulfation on 'Tyr-51' of SELPLG is important for L-selectin binding. In terms of processing, N-glycosylated. In terms of tissue distribution, highly expressed in lymphocytes from peripheral lymph nodes. Low in lymphocytes isolated from Peyer patches.

It localises to the cell membrane. Its function is as follows. Calcium-dependent lectin that mediates cell adhesion by binding to glycoproteins on neighboring cells. Mediates the adherence of lymphocytes to endothelial cells of high endothelial venules in peripheral lymph nodes. Promotes initial tethering and rolling of leukocytes in endothelia. The sequence is that of L-selectin (SELL) from Bos taurus (Bovine).